Here is a 347-residue protein sequence, read N- to C-terminus: Outer membrane protein A (347 aa).

Positions 1–21 (MKKQALTIIFLLVSLVTGIQA) are cleaved as a signal peptide. Beta stranded transmembrane passes span 26–36 (HWYLGTKMGWS), 63–74 (APVFGLFLGYEF), 78–86 (FSFEIENDT), 105–116 (NSLQLATKLSYP), 121–129 (FHIYTQLGG), 154–163 (PNVSLGAEYI), 168–175 (FITRLDYT), and 194–202 (DVALSFGWK). The tract at residues 207 to 218 (NINEIFSSYIPQ) is hinge-like. The region spanning 220–347 (SDKQYVALNE…RRVEIEVLSD (128 aa)) is the OmpA-like domain. Cys-321 and Cys-333 are oxidised to a cystine.

It belongs to the outer membrane OOP (TC 1.B.6) superfamily. OmpA family. In terms of assembly, monomer and homodimer.

It localises to the cell outer membrane. In terms of biological role, with TolR probably plays a role in maintaining the position of the peptidoglycan cell wall in the periplasm. Acts as a porin with low permeability that allows slow penetration of small solutes; an internal gate slows down solute passage. The chain is Outer membrane protein A from Buchnera aphidicola subsp. Schizaphis graminum (strain Sg).